The chain runs to 494 residues: Aspartyl/glutamyl-tRNA(Asn/Gln) amidotransferase subunit B (494 aa).

A disordered region spans residues 475-494 (TSGRADPKATNQMLAKKLKG).

Belongs to the GatB/GatE family. GatB subfamily. In terms of assembly, heterotrimer of A, B and C subunits.

The catalysed reaction is L-glutamyl-tRNA(Gln) + L-glutamine + ATP + H2O = L-glutaminyl-tRNA(Gln) + L-glutamate + ADP + phosphate + H(+). It catalyses the reaction L-aspartyl-tRNA(Asn) + L-glutamine + ATP + H2O = L-asparaginyl-tRNA(Asn) + L-glutamate + ADP + phosphate + 2 H(+). Functionally, allows the formation of correctly charged Asn-tRNA(Asn) or Gln-tRNA(Gln) through the transamidation of misacylated Asp-tRNA(Asn) or Glu-tRNA(Gln) in organisms which lack either or both of asparaginyl-tRNA or glutaminyl-tRNA synthetases. The reaction takes place in the presence of glutamine and ATP through an activated phospho-Asp-tRNA(Asn) or phospho-Glu-tRNA(Gln). The polypeptide is Aspartyl/glutamyl-tRNA(Asn/Gln) amidotransferase subunit B (Acaryochloris marina (strain MBIC 11017)).